The chain runs to 319 residues: Acetyl esterase (319 aa).

An Involved in the stabilization of the negatively charged intermediate by the formation of the oxyanion hole motif is present at residues 91 to 93; that stretch reads HGG. Residues Ser-165, Asp-262, and His-292 contribute to the active site.

This sequence belongs to the 'GDXG' lipolytic enzyme family. In terms of assembly, homodimer. Interacts with MalT and MelA.

The protein localises to the cytoplasm. Functionally, displays esterase activity towards short chain fatty esters (acyl chain length of up to 8 carbons). Able to hydrolyze triacetylglycerol (triacetin) and tributyrylglycerol (tributyrin), but not trioleylglycerol (triolein) or cholesterol oleate. Negatively regulates MalT activity by antagonizing maltotriose binding. Inhibits MelA galactosidase activity. This Escherichia coli O17:K52:H18 (strain UMN026 / ExPEC) protein is Acetyl esterase.